The primary structure comprises 182 residues: Oligoribonuclease (182 aa).

Residues 7-170 (LIWIDLEMTG…EDIRESVEEL (164 aa)) form the Exonuclease domain. Tyr-128 is an active-site residue.

This sequence belongs to the oligoribonuclease family.

It is found in the cytoplasm. 3'-to-5' exoribonuclease specific for small oligoribonucleotides. The chain is Oligoribonuclease from Hahella chejuensis (strain KCTC 2396).